The primary structure comprises 306 residues: Lipoyl synthase (306 aa).

7 residues coordinate [4Fe-4S] cluster: Cys55, Cys60, Cys66, Cys81, Cys85, Cys88, and Ser294. Residues 67–283 (WNHRTATFLL…RAYALARGFR (217 aa)) form the Radical SAM core domain.

It belongs to the radical SAM superfamily. Lipoyl synthase family. It depends on [4Fe-4S] cluster as a cofactor.

It localises to the cytoplasm. The catalysed reaction is [[Fe-S] cluster scaffold protein carrying a second [4Fe-4S](2+) cluster] + N(6)-octanoyl-L-lysyl-[protein] + 2 oxidized [2Fe-2S]-[ferredoxin] + 2 S-adenosyl-L-methionine + 4 H(+) = [[Fe-S] cluster scaffold protein] + N(6)-[(R)-dihydrolipoyl]-L-lysyl-[protein] + 4 Fe(3+) + 2 hydrogen sulfide + 2 5'-deoxyadenosine + 2 L-methionine + 2 reduced [2Fe-2S]-[ferredoxin]. It participates in protein modification; protein lipoylation via endogenous pathway; protein N(6)-(lipoyl)lysine from octanoyl-[acyl-carrier-protein]: step 2/2. In terms of biological role, catalyzes the radical-mediated insertion of two sulfur atoms into the C-6 and C-8 positions of the octanoyl moiety bound to the lipoyl domains of lipoate-dependent enzymes, thereby converting the octanoylated domains into lipoylated derivatives. This is Lipoyl synthase from Chloroflexus aggregans (strain MD-66 / DSM 9485).